A 174-amino-acid polypeptide reads, in one-letter code: B3 domain-containing protein At2g31862 (174 aa).

Positions 1–71 form a DNA-binding region, TF-B3; sequence MWVNLSCMCH…KLYIALVPLD (71 aa).

It is found in the nucleus. The chain is B3 domain-containing protein At2g31862 from Arabidopsis thaliana (Mouse-ear cress).